Here is an 805-residue protein sequence, read N- to C-terminus: Leucine--tRNA ligase (805 aa).

A 'HIGH' region motif is present at residues Pro40–His51. The short motif at Lys577–Ser581 is the 'KMSKS' region element. Residue Lys580 participates in ATP binding.

This sequence belongs to the class-I aminoacyl-tRNA synthetase family.

The protein localises to the cytoplasm. It catalyses the reaction tRNA(Leu) + L-leucine + ATP = L-leucyl-tRNA(Leu) + AMP + diphosphate. The polypeptide is Leucine--tRNA ligase (Limosilactobacillus fermentum (strain NBRC 3956 / LMG 18251) (Lactobacillus fermentum)).